The following is a 606-amino-acid chain: Sulfite reductase [NADPH] flavoprotein alpha-component (606 aa).

One can recognise a Flavodoxin-like domain in the interval 68-206 (ITILSASQTG…AAEAWRKEVT (139 aa)). FMN is bound by residues 74–79 (SQTGNA), 121–124 (STQG), and 157–166 (LGDITYEHFA). Residues 240 to 454 (ESPLTATLSV…VEHNDNFRLP (215 aa)) enclose the FAD-binding FR-type domain. FAD is bound by residues Thr-328, Gln-362, 392–395 (RLYS), 410–412 (TVG), Tyr-416, and 425–428 (GGAS). NADP(+) contacts are provided by residues 525–526 (SR), 531–535 (KVYVQ), and Asp-568. An FAD-binding site is contributed by Tyr-606.

This sequence belongs to the NADPH-dependent sulphite reductase flavoprotein subunit CysJ family. In the N-terminal section; belongs to the flavodoxin family. It in the C-terminal section; belongs to the flavoprotein pyridine nucleotide cytochrome reductase family. Alpha(8)-beta(8). The alpha component is a flavoprotein, the beta component is a hemoprotein. FAD serves as cofactor. FMN is required as a cofactor.

The enzyme catalyses hydrogen sulfide + 3 NADP(+) + 3 H2O = sulfite + 3 NADPH + 4 H(+). Its pathway is sulfur metabolism; hydrogen sulfide biosynthesis; hydrogen sulfide from sulfite (NADPH route): step 1/1. Its function is as follows. Component of the sulfite reductase complex that catalyzes the 6-electron reduction of sulfite to sulfide. This is one of several activities required for the biosynthesis of L-cysteine from sulfate. The flavoprotein component catalyzes the electron flow from NADPH -&gt; FAD -&gt; FMN to the hemoprotein component. The chain is Sulfite reductase [NADPH] flavoprotein alpha-component from Zymomonas mobilis subsp. mobilis (strain ATCC 31821 / ZM4 / CP4).